A 178-amino-acid polypeptide reads, in one-letter code: Peptide deformylase (178 aa).

Fe cation contacts are provided by cysteine 92 and histidine 134. Residue glutamate 135 is part of the active site. Histidine 138 contacts Fe cation.

This sequence belongs to the polypeptide deformylase family. Requires Fe(2+) as cofactor.

The catalysed reaction is N-terminal N-formyl-L-methionyl-[peptide] + H2O = N-terminal L-methionyl-[peptide] + formate. Its function is as follows. Removes the formyl group from the N-terminal Met of newly synthesized proteins. Requires at least a dipeptide for an efficient rate of reaction. N-terminal L-methionine is a prerequisite for activity but the enzyme has broad specificity at other positions. In Alkalilimnicola ehrlichii (strain ATCC BAA-1101 / DSM 17681 / MLHE-1), this protein is Peptide deformylase.